Reading from the N-terminus, the 876-residue chain is MAP7 domain-containing protein 3 (876 aa).

The residue at position 1 (Met-1) is an N-acetylmethionine. Residues 65-144 (NDIKQRLARE…DEAQKEKFTA (80 aa)) are a coiled coil. Disordered stretches follow at residues 72-137 (ARER…KDEA) and 170-246 (AMAN…KPRV). Residues 171–183 (MANSESKTANKRS) show a composition bias toward polar residues. The residue at position 185 (Ser-185) is a Phosphoserine. Positions 191 to 211 (QGTSALIRQMPLSSAGLQNSV) are enriched in polar residues. The span at 214-244 (RKTDKERSSSLNRRDSNLHSSTDKEQAERKP) shows a compositional bias: basic and acidic residues. At Ser-322 the chain carries Phosphoserine. Residues 407 to 475 (EAAPEGSLEA…ARDAPKKSEM (69 aa)) are disordered. The span at 425–438 (APKESVKGSPKESM) shows a compositional bias: basic and acidic residues. 3 positions are modified to phosphoserine: Ser-441, Ser-457, and Ser-461. A compositionally biased stretch (basic and acidic residues) spans 465-475 (KARDAPKKSEM). Ser-490 carries the phosphoserine modification. Disordered stretches follow at residues 509-533 (SPIS…SKQS), 613-697 (QREK…KKEH), and 723-754 (RKTD…SDKD). A compositionally biased stretch (polar residues) spans 510 to 521 (PISTNRQIQKNC). Residue Ser-524 is modified to Phosphoserine. Coiled-coil stretches lie at residues 558–640 (VKKK…MAKE) and 689–724 (EADK…RTRK). 2 stretches are compositionally biased toward basic and acidic residues: residues 613 to 639 (QREK…DMAK) and 680 to 697 (GDAK…KKEH). Positions 742 to 752 (EEAEADNEESD) are enriched in acidic residues. Residues Ser-770 and Ser-817 each carry the phosphoserine modification. The segment at 802–876 (PKTYFNGDLK…LPKSSDTFRQ (75 aa)) is disordered. The segment covering 820–830 (DTSIQEVVSRP) has biased composition (polar residues). Over residues 831–842 (SSKRMTSHTTKT) the composition is skewed to basic residues. Ser-832 carries the post-translational modification Phosphoserine. Positions 848–860 (TNTTSRSSAQTKS) are enriched in polar residues. A compositionally biased stretch (basic and acidic residues) spans 861–876 (EGFHDILPKSSDTFRQ).

The protein belongs to the MAP7 family. As to quaternary structure, interacts (via N-terminus coiled coil domains) with tubulin and microtubules.

Its subcellular location is the cytoplasm. The protein resides in the cytoskeleton. The protein localises to the spindle. Its function is as follows. Promotes the assembly and stability of microtubules. The chain is MAP7 domain-containing protein 3 (MAP7D3) from Homo sapiens (Human).